The primary structure comprises 234 residues: Short neuropeptide F (234 aa).

An N-terminal signal peptide occupies residues 1–22; that stretch reads MYRINLTTFTLLLVLAVGSLMS. A propeptide spanning residues 23–56 is cleaved from the precursor; it reads ESLHPSDGAINDLYEYLLQREYAAPVSYADHQIK. 2 positions are modified to phenylalanine amide: F69 and F101. Tryptophan amide is present on W132. Phenylalanine amide is present on F165. Positions 181-190 are enriched in polar residues; it reads TTGQQAQPAN. Residues 181 to 234 are disordered; sequence TTGQQAQPANEASEKRAPTQRLRWGRSDPALAKDSSEDKALDVEESENTNADDK. The residue at position 204 (W204) is a Tryptophan amide. Residues 207–234 constitute a propeptide that is removed on maturation; that stretch reads SDPALAKDSSEDKALDVEESENTNADDK.

This sequence belongs to the NPY family. As to expression, expressed in all body parts of larva, pupae and adults.

The protein resides in the secreted. Functionally, plays a role in controlling food intake and regulating body size. The chain is Short neuropeptide F from Anopheles gambiae (African malaria mosquito).